Here is a 134-residue protein sequence, read N- to C-terminus: Small ribosomal subunit protein uS9 (134 aa).

Residues 109 to 134 are disordered; the sequence is KGDPRRKEPKKFGGRGARARRQKSYR. A compositionally biased stretch (basic residues) spans 115–134; it reads KEPKKFGGRGARARRQKSYR.

This sequence belongs to the universal ribosomal protein uS9 family.

The chain is Small ribosomal subunit protein uS9 from Methanopyrus kandleri (strain AV19 / DSM 6324 / JCM 9639 / NBRC 100938).